The following is a 348-amino-acid chain: Selenide, water dikinase (348 aa).

Cysteine 17 is a catalytic residue. Residues lysine 20 and 48–50 each bind ATP; that span reads TRD. Aspartate 51 is a binding site for Mg(2+). ATP is bound by residues aspartate 68, aspartate 91, and 139–141; that span reads GHS. Aspartate 91 contacts Mg(2+). Aspartate 227 provides a ligand contact to Mg(2+).

This sequence belongs to the selenophosphate synthase 1 family. Class I subfamily. Homodimer. Requires Mg(2+) as cofactor.

The catalysed reaction is hydrogenselenide + ATP + H2O = selenophosphate + AMP + phosphate + 2 H(+). Functionally, synthesizes selenophosphate from selenide and ATP. The sequence is that of Selenide, water dikinase from Yersinia pestis.